The primary structure comprises 600 residues: Gamma-terpinene synthase, chloroplastic (600 aa).

The transit peptide at 1-40 directs the protein to the chloroplast; it reads MALNLLSSLPAACNFTRLSLPLSSKVNGFVPPITQVQYPM. The Mg(2+) site is built by aspartate 353, aspartate 357, aspartate 498, and glutamate 506. The DDXXD motif motif lies at 353 to 357; the sequence is DDVYD.

It belongs to the terpene synthase family. The cofactor is Mn(2+). Requires Mg(2+) as cofactor.

The protein localises to the plastid. It localises to the chloroplast. It carries out the reaction (2E)-geranyl diphosphate = gamma-terpinene + diphosphate. The protein operates within secondary metabolite biosynthesis; terpenoid biosynthesis. With respect to regulation, inhibited by 100 mM KCl. Monoterpene synthase which catalyzes the conversion of geranyl diphosphate to gamma-terpinene and the minor products limonene, alpha-pinene, beta-pinene, alpha-terpinolene, alpha-thujene, alpha-terpinene, myrcene and sabinene. The chain is Gamma-terpinene synthase, chloroplastic from Citrus limon (Lemon).